Reading from the N-terminus, the 453-residue chain is Putative dipeptidase UREG_03382 (453 aa).

The segment at 1–33 (MSTRDHVKQSPMPVQEGYPRSSKEFSPPSSRSR) is disordered. Residues 41-63 (LTMSLLIAAGAATFSKYIFPLGS) form a helical membrane-spanning segment. Residues His-95, Asp-97, and Glu-208 each contribute to the Zn(2+) site. Cys-147 and Cys-223 are oxidised to a cystine. Residue His-221 coordinates substrate. Residues His-265 and His-286 each coordinate Zn(2+). Residues Arg-297 and Asp-357 each coordinate substrate. N-linked (GlcNAc...) asparagine glycans are attached at residues Asn-370 and Asn-443.

It belongs to the metallo-dependent hydrolases superfamily. Peptidase M19 family. It depends on Zn(2+) as a cofactor.

The protein resides in the membrane. It catalyses the reaction an L-aminoacyl-L-amino acid + H2O = 2 an L-alpha-amino acid. Functionally, hydrolyzes a wide range of dipeptides. This Uncinocarpus reesii (strain UAMH 1704) protein is Putative dipeptidase UREG_03382.